The chain runs to 76 residues: DNA-directed RNA polymerase subunit omega (76 aa).

This sequence belongs to the RNA polymerase subunit omega family. As to quaternary structure, in cyanobacteria the RNAP catalytic core is composed of 2 alpha, 1 beta, 1 beta', 1 gamma and 1 omega subunit. When a sigma factor is associated with the core the holoenzyme is formed, which can initiate transcription.

It carries out the reaction RNA(n) + a ribonucleoside 5'-triphosphate = RNA(n+1) + diphosphate. Its function is as follows. Promotes RNA polymerase assembly. Latches the N- and C-terminal regions of the beta' subunit thereby facilitating its interaction with the beta and alpha subunits. This is DNA-directed RNA polymerase subunit omega (rpoZ) from Synechocystis sp. (strain ATCC 27184 / PCC 6803 / Kazusa).